Here is a 214-residue protein sequence, read N- to C-terminus: Probable transaldolase (214 aa).

Lys83 acts as the Schiff-base intermediate with substrate in catalysis.

This sequence belongs to the transaldolase family. Type 3B subfamily.

It localises to the cytoplasm. It catalyses the reaction D-sedoheptulose 7-phosphate + D-glyceraldehyde 3-phosphate = D-erythrose 4-phosphate + beta-D-fructose 6-phosphate. It functions in the pathway carbohydrate degradation; pentose phosphate pathway; D-glyceraldehyde 3-phosphate and beta-D-fructose 6-phosphate from D-ribose 5-phosphate and D-xylulose 5-phosphate (non-oxidative stage): step 2/3. Functionally, transaldolase is important for the balance of metabolites in the pentose-phosphate pathway. The sequence is that of Probable transaldolase from Citrifermentans bemidjiense (strain ATCC BAA-1014 / DSM 16622 / JCM 12645 / Bem) (Geobacter bemidjiensis).